A 255-amino-acid polypeptide reads, in one-letter code: Tabinhibitin 7 (255 aa).

Residues 1–23 (MTSILVSSFLLATLVLQYATIDA) form the signal peptide. A Cell attachment site motif is present at residues 32-34 (RGD). The SCP domain maps to 67–211 (LSKINDVRDH…KARALLTCNF (145 aa)).

The protein belongs to the CRISP family. As to expression, expressed in salivary glands.

It localises to the secreted. Inhibits platelet aggregation induced by all agonists tested (ADP, arachidonic acid, the thromboxane A2 analog U46619, thrombin, and snake venom snaclecs (TMVA that activates platelet through GPIB, and stejnulxin that specifically acts through GPVI (GP6))). May act by competing with fibrinogen for binding to glycoprotein IIb/IIIa (ITGA2B/ITGB3). This chain is Tabinhibitin 7, found in Tabanus yao (Horsefly).